Reading from the N-terminus, the 258-residue chain is Methylthioribulose-1-phosphate dehydratase (258 aa).

The segment covering methionine 1 to aspartate 20 has biased composition (polar residues). The interval methionine 1–asparagine 21 is disordered. Cysteine 105 is a substrate binding site. Zn(2+) contacts are provided by histidine 123 and histidine 125. The Proton donor/acceptor role is filled by glutamate 153. Zn(2+) is bound at residue histidine 210.

The protein belongs to the aldolase class II family. MtnB subfamily. The cofactor is Zn(2+).

It localises to the cytoplasm. It catalyses the reaction 5-(methylsulfanyl)-D-ribulose 1-phosphate = 5-methylsulfanyl-2,3-dioxopentyl phosphate + H2O. It functions in the pathway amino-acid biosynthesis; L-methionine biosynthesis via salvage pathway; L-methionine from S-methyl-5-thio-alpha-D-ribose 1-phosphate: step 2/6. In terms of biological role, catalyzes the dehydration of methylthioribulose-1-phosphate (MTRu-1-P) into 2,3-diketo-5-methylthiopentyl-1-phosphate (DK-MTP-1-P). This is Methylthioribulose-1-phosphate dehydratase from Chaetomium globosum (strain ATCC 6205 / CBS 148.51 / DSM 1962 / NBRC 6347 / NRRL 1970) (Soil fungus).